Reading from the N-terminus, the 315-residue chain is Methionyl-tRNA formyltransferase (315 aa).

Position 112–115 (112–115 (SLLP)) interacts with (6S)-5,6,7,8-tetrahydrofolate.

Belongs to the Fmt family.

It catalyses the reaction L-methionyl-tRNA(fMet) + (6R)-10-formyltetrahydrofolate = N-formyl-L-methionyl-tRNA(fMet) + (6S)-5,6,7,8-tetrahydrofolate + H(+). Functionally, attaches a formyl group to the free amino group of methionyl-tRNA(fMet). The formyl group appears to play a dual role in the initiator identity of N-formylmethionyl-tRNA by promoting its recognition by IF2 and preventing the misappropriation of this tRNA by the elongation apparatus. This chain is Methionyl-tRNA formyltransferase, found in Leptospira interrogans serogroup Icterohaemorrhagiae serovar copenhageni (strain Fiocruz L1-130).